The sequence spans 147 residues: 3-hydroxyacyl-[acyl-carrier-protein] dehydratase FabZ (147 aa).

His46 is a catalytic residue.

It belongs to the thioester dehydratase family. FabZ subfamily.

Its subcellular location is the cytoplasm. It catalyses the reaction a (3R)-hydroxyacyl-[ACP] = a (2E)-enoyl-[ACP] + H2O. In terms of biological role, involved in unsaturated fatty acids biosynthesis. Catalyzes the dehydration of short chain beta-hydroxyacyl-ACPs and long chain saturated and unsaturated beta-hydroxyacyl-ACPs. This Syntrophobacter fumaroxidans (strain DSM 10017 / MPOB) protein is 3-hydroxyacyl-[acyl-carrier-protein] dehydratase FabZ.